We begin with the raw amino-acid sequence, 311 residues long: Ribosomal RNA small subunit methyltransferase H 1 (311 aa).

Residues 33–35 (AGH), Asp53, Phe80, Asp101, and Gln108 each bind S-adenosyl-L-methionine.

This sequence belongs to the methyltransferase superfamily. RsmH family.

The protein localises to the cytoplasm. It catalyses the reaction cytidine(1402) in 16S rRNA + S-adenosyl-L-methionine = N(4)-methylcytidine(1402) in 16S rRNA + S-adenosyl-L-homocysteine + H(+). Specifically methylates the N4 position of cytidine in position 1402 (C1402) of 16S rRNA. The chain is Ribosomal RNA small subunit methyltransferase H 1 from Alkaliphilus metalliredigens (strain QYMF).